Here is a 330-residue protein sequence, read N- to C-terminus: Ketol-acid reductoisomerase (NADP(+)) (330 aa).

Residues 2–182 (ARMYYDADAN…GGTRAGILET (181 aa)) form the KARI N-terminal Rossmann domain. Residues 25–28 (YGSQ), S51, S53, and 83–86 (DEFQ) contribute to the NADP(+) site. H108 is a catalytic residue. G134 contributes to the NADP(+) binding site. The KARI C-terminal knotted domain maps to 183–328 (SFREETETDL…KDLRAMFSWL (146 aa)). Mg(2+) is bound by residues D191, E195, E227, and E231. S252 serves as a coordination point for substrate.

The protein belongs to the ketol-acid reductoisomerase family. Requires Mg(2+) as cofactor.

The catalysed reaction is (2R)-2,3-dihydroxy-3-methylbutanoate + NADP(+) = (2S)-2-acetolactate + NADPH + H(+). It carries out the reaction (2R,3R)-2,3-dihydroxy-3-methylpentanoate + NADP(+) = (S)-2-ethyl-2-hydroxy-3-oxobutanoate + NADPH + H(+). Its pathway is amino-acid biosynthesis; L-isoleucine biosynthesis; L-isoleucine from 2-oxobutanoate: step 2/4. It functions in the pathway amino-acid biosynthesis; L-valine biosynthesis; L-valine from pyruvate: step 2/4. Its function is as follows. Involved in the biosynthesis of branched-chain amino acids (BCAA). Catalyzes an alkyl-migration followed by a ketol-acid reduction of (S)-2-acetolactate (S2AL) to yield (R)-2,3-dihydroxy-isovalerate. In the isomerase reaction, S2AL is rearranged via a Mg-dependent methyl migration to produce 3-hydroxy-3-methyl-2-ketobutyrate (HMKB). In the reductase reaction, this 2-ketoacid undergoes a metal-dependent reduction by NADPH to yield (R)-2,3-dihydroxy-isovalerate. In Synechococcus elongatus (strain ATCC 33912 / PCC 7942 / FACHB-805) (Anacystis nidulans R2), this protein is Ketol-acid reductoisomerase (NADP(+)).